The chain runs to 93 residues: Large ribosomal subunit protein uL23 (93 aa).

Belongs to the universal ribosomal protein uL23 family. As to quaternary structure, part of the 50S ribosomal subunit. Contacts protein L29, and trigger factor when it is bound to the ribosome.

Its function is as follows. One of the early assembly proteins it binds 23S rRNA. One of the proteins that surrounds the polypeptide exit tunnel on the outside of the ribosome. Forms the main docking site for trigger factor binding to the ribosome. The protein is Large ribosomal subunit protein uL23 of Campylobacter jejuni subsp. jejuni serotype O:6 (strain 81116 / NCTC 11828).